Reading from the N-terminus, the 469-residue chain is Glutamate--tRNA ligase (469 aa).

Residues 10-20 carry the 'HIGH' region motif; that stretch reads PSPTGYLHVGG. Cysteine 99, cysteine 101, cysteine 126, and aspartate 128 together coordinate Zn(2+). A 'KMSKS' region motif is present at residues 238-242; the sequence is RLSKR. Lysine 241 is an ATP binding site.

Belongs to the class-I aminoacyl-tRNA synthetase family. Glutamate--tRNA ligase type 1 subfamily. In terms of assembly, monomer. The cofactor is Zn(2+).

The protein localises to the cytoplasm. The catalysed reaction is tRNA(Glu) + L-glutamate + ATP = L-glutamyl-tRNA(Glu) + AMP + diphosphate. Its function is as follows. Catalyzes the attachment of glutamate to tRNA(Glu) in a two-step reaction: glutamate is first activated by ATP to form Glu-AMP and then transferred to the acceptor end of tRNA(Glu). The sequence is that of Glutamate--tRNA ligase from Pelobacter propionicus (strain DSM 2379 / NBRC 103807 / OttBd1).